The primary structure comprises 84 residues: Acyl carrier protein (84 aa).

Residues 6–81 form the Carrier domain; sequence EEILTGLAEI…DAVDYIANAT (76 aa). Ser-41 carries the post-translational modification O-(pantetheine 4'-phosphoryl)serine.

The protein belongs to the acyl carrier protein (ACP) family. In terms of processing, 4'-phosphopantetheine is transferred from CoA to a specific serine of apo-ACP by AcpS. This modification is essential for activity because fatty acids are bound in thioester linkage to the sulfhydryl of the prosthetic group.

It localises to the cytoplasm. The protein operates within lipid metabolism; fatty acid biosynthesis. In terms of biological role, carrier of the growing fatty acid chain in fatty acid biosynthesis. This chain is Acyl carrier protein, found in Acidothermus cellulolyticus (strain ATCC 43068 / DSM 8971 / 11B).